Reading from the N-terminus, the 216-residue chain is Transmembrane protein 125 (216 aa).

4 consecutive transmembrane segments (helical) span residues 32 to 52 (LLCF…GVAL), 65 to 85 (LAVG…QLMS), 111 to 131 (AVVV…LAGL), and 144 to 164 (MLSV…GLLL).

It localises to the membrane. This is Transmembrane protein 125 (Tmem125) from Mus musculus (Mouse).